The sequence spans 180 residues: uncharacterized protein (180 aa).

The Macro domain maps to 1 to 180 (MVEFEIVKGD…KDYERALRAV (180 aa)).

This is an uncharacterized protein from Thermococcus kodakarensis (strain ATCC BAA-918 / JCM 12380 / KOD1) (Pyrococcus kodakaraensis (strain KOD1)).